A 179-amino-acid polypeptide reads, in one-letter code: ATP synthase subunit delta (179 aa).

It belongs to the ATPase delta chain family. F-type ATPases have 2 components, F(1) - the catalytic core - and F(0) - the membrane proton channel. F(1) has five subunits: alpha(3), beta(3), gamma(1), delta(1), epsilon(1). F(0) has three main subunits: a(1), b(2) and c(10-14). The alpha and beta chains form an alternating ring which encloses part of the gamma chain. F(1) is attached to F(0) by a central stalk formed by the gamma and epsilon chains, while a peripheral stalk is formed by the delta and b chains.

It localises to the cell inner membrane. In terms of biological role, f(1)F(0) ATP synthase produces ATP from ADP in the presence of a proton or sodium gradient. F-type ATPases consist of two structural domains, F(1) containing the extramembraneous catalytic core and F(0) containing the membrane proton channel, linked together by a central stalk and a peripheral stalk. During catalysis, ATP synthesis in the catalytic domain of F(1) is coupled via a rotary mechanism of the central stalk subunits to proton translocation. This protein is part of the stalk that links CF(0) to CF(1). It either transmits conformational changes from CF(0) to CF(1) or is implicated in proton conduction. In Anaeromyxobacter sp. (strain K), this protein is ATP synthase subunit delta.